A 273-amino-acid chain; its full sequence is Zinc finger protein 80 (273 aa).

Residues 49 to 71 form a C2H2-type 1 zinc finger; sequence YKCKECGSVFNKNSLLVRHQQIH. The segment at 77–99 adopts a C2H2-type 2; degenerate zinc-finger fold; the sequence is YEYQECGKAFPEKVDFVRHMRIH. The segment at 105–127 adopts a C2H2-type 3; atypical zinc-finger fold; it reads CKCVECRKVFNRRSHLLCYRQIH. C2H2-type zinc fingers lie at residues 133–155, 161–183, 187–211, and 217–239; these read YECSECGKTFSYHSVFIQHRVTH, FGCKECGKTFYYNSSLTRHMKIH, KPCKCSECGKTFTYHSVFFRHSMTH, and YECKECGKGFYYSYSLTRHTRSH.

It belongs to the krueppel C2H2-type zinc-finger protein family.

It is found in the nucleus. Functionally, may be involved in transcriptional regulation. In Pan troglodytes (Chimpanzee), this protein is Zinc finger protein 80 (ZNF80).